A 598-amino-acid polypeptide reads, in one-letter code: Elongation factor 4 (598 aa).

The region spanning 2 to 184 (DNVRNFAIIA…AIITKLPAPQ (183 aa)) is the tr-type G domain. GTP contacts are provided by residues 14-19 (DHGKST) and 131-134 (NKVD).

This sequence belongs to the TRAFAC class translation factor GTPase superfamily. Classic translation factor GTPase family. LepA subfamily.

The protein localises to the cell membrane. The enzyme catalyses GTP + H2O = GDP + phosphate + H(+). Required for accurate and efficient protein synthesis under certain stress conditions. May act as a fidelity factor of the translation reaction, by catalyzing a one-codon backward translocation of tRNAs on improperly translocated ribosomes. Back-translocation proceeds from a post-translocation (POST) complex to a pre-translocation (PRE) complex, thus giving elongation factor G a second chance to translocate the tRNAs correctly. Binds to ribosomes in a GTP-dependent manner. This Wolbachia sp. subsp. Brugia malayi (strain TRS) protein is Elongation factor 4.